Here is a 491-residue protein sequence, read N- to C-terminus: Cytochrome P450 2F1 (491 aa).

C436 is a heme binding site.

This sequence belongs to the cytochrome P450 family. Heme is required as a cofactor. As to expression, expressed in lung. Rarely detected in liver and placenta.

Its subcellular location is the endoplasmic reticulum membrane. It localises to the microsome membrane. It carries out the reaction an organic molecule + reduced [NADPH--hemoprotein reductase] + O2 = an alcohol + oxidized [NADPH--hemoprotein reductase] + H2O + H(+). In terms of biological role, may be involved in the metabolism of various pneumotoxicants including naphthalene. Is able to dealkylate ethoxycoumarin, propoxycoumarin, and pentoxyresorufin but possesses no activity toward ethoxyresorufin and only trace dearylation activity toward benzyloxyresorufin. Bioactivates 3-methylindole (3MI) by dehydrogenation to the putative electrophile 3-methylene-indolenine. The protein is Cytochrome P450 2F1 (CYP2F1) of Homo sapiens (Human).